An 830-amino-acid polypeptide reads, in one-letter code: Lon protease (830 aa).

Positions 20-215 (LPAVAIRDVV…LLIKILANEV (196 aa)) constitute a Lon N-terminal domain. ATP is bound at residue 367-374 (GPPGVGKT). The region spanning 602–781 (ENGVGISTGL…DEIVKIAFEK (180 aa)) is the Lon proteolytic domain. Residues S687 and K730 contribute to the active site. The disordered stretch occupies residues 784 to 830 (PKSSFKKSKTAPKKESAKKAAKSKKPAVKKPAVKKTKQVKKTAKKKK). Residues 802-830 (KAAKSKKPAVKKPAVKKTKQVKKTAKKKK) are compositionally biased toward basic residues.

It belongs to the peptidase S16 family. Homohexamer. Organized in a ring with a central cavity.

It localises to the cytoplasm. The catalysed reaction is Hydrolysis of proteins in presence of ATP.. Its function is as follows. ATP-dependent serine protease that mediates the selective degradation of mutant and abnormal proteins as well as certain short-lived regulatory proteins. Required for cellular homeostasis and for survival from DNA damage and developmental changes induced by stress. Degrades polypeptides processively to yield small peptide fragments that are 5 to 10 amino acids long. Binds to DNA in a double-stranded, site-specific manner. In Elusimicrobium minutum (strain Pei191), this protein is Lon protease.